We begin with the raw amino-acid sequence, 263 residues long: 3-methyl-2-oxobutanoate hydroxymethyltransferase (263 aa).

2 residues coordinate Mg(2+): aspartate 43 and aspartate 82. 3-methyl-2-oxobutanoate-binding positions include 43–44, aspartate 82, and lysine 111; that span reads DS. Glutamate 113 serves as a coordination point for Mg(2+). The Proton acceptor role is filled by glutamate 179.

This sequence belongs to the PanB family. As to quaternary structure, homodecamer; pentamer of dimers. Mg(2+) serves as cofactor.

It is found in the cytoplasm. It carries out the reaction 3-methyl-2-oxobutanoate + (6R)-5,10-methylene-5,6,7,8-tetrahydrofolate + H2O = 2-dehydropantoate + (6S)-5,6,7,8-tetrahydrofolate. The protein operates within cofactor biosynthesis; (R)-pantothenate biosynthesis; (R)-pantoate from 3-methyl-2-oxobutanoate: step 1/2. Catalyzes the reversible reaction in which hydroxymethyl group from 5,10-methylenetetrahydrofolate is transferred onto alpha-ketoisovalerate to form ketopantoate. This is 3-methyl-2-oxobutanoate hydroxymethyltransferase from Neisseria meningitidis serogroup B (strain ATCC BAA-335 / MC58).